We begin with the raw amino-acid sequence, 231 residues long: NAD(+) ADP-ribosyltransferase (231 aa).

The enzyme catalyses NAD(+) + (ADP-D-ribosyl)n-acceptor = nicotinamide + (ADP-D-ribosyl)n+1-acceptor + H(+).. Its activity is regulated as follows. Activity increases up to 5-6 times with Mg(2+) at 50 uM or higher ion concentration. 3-aminobenzamide (3-ABA) inhibits the activity by up to half and nicotinamide to a lesser extent. Zn(2+) inhibits the activity to half-maximal rate but at 500 uM concentration of the ion. In terms of biological role, catalyzes auto- and hetero-ADP ribosylation and produces short oligomers by elongating the ADP-ribose chain (up to 6-mer). Binds DNA non-specifically but with high affinity. Forms very stable complexes with circular DNA wherein the circular DNA confers thermostability compared to linear DNA. This is NAD(+) ADP-ribosyltransferase from Saccharolobus solfataricus (Sulfolobus solfataricus).